Here is a 339-residue protein sequence, read N- to C-terminus: Protein pelota homolog (339 aa).

This sequence belongs to the eukaryotic release factor 1 family. Pelota subfamily. In terms of assembly, monomer. Requires a divalent metal cation as cofactor.

Its subcellular location is the cytoplasm. Its function is as follows. May function in recognizing stalled ribosomes, interact with stem-loop structures in stalled mRNA molecules, and effect endonucleolytic cleavage of the mRNA. May play a role in the release non-functional ribosomes and degradation of damaged mRNAs. Has endoribonuclease activity. This chain is Protein pelota homolog, found in Picrophilus torridus (strain ATCC 700027 / DSM 9790 / JCM 10055 / NBRC 100828 / KAW 2/3).